The chain runs to 458 residues: Bifunctional protein GlmU (458 aa).

The pyrophosphorylase stretch occupies residues 1 to 230; that stretch reads MLQIDVVILA…DWEVVGVNDK (230 aa). Residues 9-12, Lys-23, Gln-75, and 80-81 each bind UDP-N-acetyl-alpha-D-glucosamine; these read LAAG and GT. Mg(2+) is bound at residue Asp-104. UDP-N-acetyl-alpha-D-glucosamine is bound by residues Gly-139, Glu-155, Asn-170, and Asn-228. Asn-228 is a Mg(2+) binding site. A linker region spans residues 231–251; the sequence is IQLSTLERAHQQDVAKGLMEQ. An N-acetyltransferase region spans residues 252 to 458; it reads GVMFADPARF…NWKRPKKNKD (207 aa). UDP-N-acetyl-alpha-D-glucosamine is bound by residues Arg-334 and Lys-352. His-364 functions as the Proton acceptor in the catalytic mechanism. UDP-N-acetyl-alpha-D-glucosamine contacts are provided by Tyr-367 and Asn-378. Acetyl-CoA contacts are provided by residues Ala-381, 387-388, Ser-406, Ala-424, and Arg-441; that span reads NY.

The protein in the N-terminal section; belongs to the N-acetylglucosamine-1-phosphate uridyltransferase family. It in the C-terminal section; belongs to the transferase hexapeptide repeat family. Homotrimer. The cofactor is Mg(2+).

It is found in the cytoplasm. It carries out the reaction alpha-D-glucosamine 1-phosphate + acetyl-CoA = N-acetyl-alpha-D-glucosamine 1-phosphate + CoA + H(+). The catalysed reaction is N-acetyl-alpha-D-glucosamine 1-phosphate + UTP + H(+) = UDP-N-acetyl-alpha-D-glucosamine + diphosphate. The protein operates within nucleotide-sugar biosynthesis; UDP-N-acetyl-alpha-D-glucosamine biosynthesis; N-acetyl-alpha-D-glucosamine 1-phosphate from alpha-D-glucosamine 6-phosphate (route II): step 2/2. Its pathway is nucleotide-sugar biosynthesis; UDP-N-acetyl-alpha-D-glucosamine biosynthesis; UDP-N-acetyl-alpha-D-glucosamine from N-acetyl-alpha-D-glucosamine 1-phosphate: step 1/1. It participates in bacterial outer membrane biogenesis; LPS lipid A biosynthesis. Its function is as follows. Catalyzes the last two sequential reactions in the de novo biosynthetic pathway for UDP-N-acetylglucosamine (UDP-GlcNAc). The C-terminal domain catalyzes the transfer of acetyl group from acetyl coenzyme A to glucosamine-1-phosphate (GlcN-1-P) to produce N-acetylglucosamine-1-phosphate (GlcNAc-1-P), which is converted into UDP-GlcNAc by the transfer of uridine 5-monophosphate (from uridine 5-triphosphate), a reaction catalyzed by the N-terminal domain. This is Bifunctional protein GlmU from Nitrosomonas eutropha (strain DSM 101675 / C91 / Nm57).